Consider the following 295-residue polypeptide: uncharacterized protein (295 aa).

Disordered regions lie at residues 33-52 (VDAP…DSHS) and 180-295 (LSKA…AELK). Position 50 is a phosphoserine (Ser-50). 2 stretches are compositionally biased toward polar residues: residues 205–217 (QKNS…SKLI) and 241–251 (TSRASVLSQSP). Residues 267–276 (EASEGPEDTP) are compositionally biased toward acidic residues. The span at 277 to 289 (ESSQSPEESVSAS) shows a compositional bias: low complexity.

This is an uncharacterized protein from Homo sapiens (Human).